The chain runs to 124 residues: Large ribosomal subunit protein bL12 (124 aa).

It belongs to the bacterial ribosomal protein bL12 family. Homodimer. Part of the ribosomal stalk of the 50S ribosomal subunit. Forms a multimeric L10(L12)X complex, where L10 forms an elongated spine to which 2 to 4 L12 dimers bind in a sequential fashion. Binds GTP-bound translation factors.

Its function is as follows. Forms part of the ribosomal stalk which helps the ribosome interact with GTP-bound translation factors. Is thus essential for accurate translation. The polypeptide is Large ribosomal subunit protein bL12 (Pelodictyon phaeoclathratiforme (strain DSM 5477 / BU-1)).